The sequence spans 638 residues: Phosphomethylpyrimidine synthase (638 aa).

Substrate is bound by residues Asn-236, Met-265, Tyr-294, His-330, 350-352, 391-394, and Glu-430; these read SRG and DGLR. His-434 serves as a coordination point for Zn(2+). Residue Tyr-457 coordinates substrate. His-498 contacts Zn(2+). 3 residues coordinate [4Fe-4S] cluster: Cys-578, Cys-581, and Cys-586.

This sequence belongs to the ThiC family. Homodimer. Requires [4Fe-4S] cluster as cofactor.

It carries out the reaction 5-amino-1-(5-phospho-beta-D-ribosyl)imidazole + S-adenosyl-L-methionine = 4-amino-2-methyl-5-(phosphooxymethyl)pyrimidine + CO + 5'-deoxyadenosine + formate + L-methionine + 3 H(+). It functions in the pathway cofactor biosynthesis; thiamine diphosphate biosynthesis. Functionally, catalyzes the synthesis of the hydroxymethylpyrimidine phosphate (HMP-P) moiety of thiamine from aminoimidazole ribotide (AIR) in a radical S-adenosyl-L-methionine (SAM)-dependent reaction. In Polaromonas sp. (strain JS666 / ATCC BAA-500), this protein is Phosphomethylpyrimidine synthase.